We begin with the raw amino-acid sequence, 651 residues long: Intraflagellar transport protein 70A (651 aa).

TPR repeat units follow at residues 8–41, 42–75, 140–173, 175–207, 372–405, 410–443, and 445–478; these read DGEY…QYRS, RAGL…SPEV, PESE…MGYK, DLSF…GIRE, LTEQ…YDET, IPVL…CNEH, and IWKL…HYDN. Residues 494-521 adopt a coiled-coil conformation; the sequence is YIMTSQNEEAEELMRKIEKEEEQIAYEN. The stretch at 530–563 is one TPR 8 repeat; it reads CIVNLVIGTLYCAKGNYEFGISRVIKSLEPYNKK.

Belongs to the TTC30/dfy-1/fleer family.

The protein localises to the cell projection. The protein resides in the cilium. In terms of biological role, required for polyglutamylation of axonemal tubulin. Plays a role in anterograde intraflagellar transport (IFT), the process by which cilia precursors are transported from the base of the cilium to the site of their incorporation at the tip. The chain is Intraflagellar transport protein 70A (ift70a) from Xenopus laevis (African clawed frog).